The primary structure comprises 379 residues: Chaperone protein DnaJ (379 aa).

One can recognise a J domain in the interval 4-69; the sequence is DLYETLGVQK…QKRAAYDRYG (66 aa). Residues 137–215 form a CR-type zinc finger; sequence GKTAQIRVPT…CHGQGRVVEE (79 aa). Zn(2+)-binding residues include Cys-150, Cys-153, Cys-167, Cys-170, Cys-189, Cys-192, Cys-203, and Cys-206. CXXCXGXG motif repeat units follow at residues 150 to 157, 167 to 174, 189 to 196, and 203 to 210; these read CDVCTGTG, CGTCQGTG, CPTCGGRG, and CTKCHGQG.

Belongs to the DnaJ family. In terms of assembly, homodimer. The cofactor is Zn(2+).

Its subcellular location is the cytoplasm. Functionally, participates actively in the response to hyperosmotic and heat shock by preventing the aggregation of stress-denatured proteins and by disaggregating proteins, also in an autonomous, DnaK-independent fashion. Unfolded proteins bind initially to DnaJ; upon interaction with the DnaJ-bound protein, DnaK hydrolyzes its bound ATP, resulting in the formation of a stable complex. GrpE releases ADP from DnaK; ATP binding to DnaK triggers the release of the substrate protein, thus completing the reaction cycle. Several rounds of ATP-dependent interactions between DnaJ, DnaK and GrpE are required for fully efficient folding. Also involved, together with DnaK and GrpE, in the DNA replication of plasmids through activation of initiation proteins. The polypeptide is Chaperone protein DnaJ (Rhizobium meliloti (strain 1021) (Ensifer meliloti)).